The chain runs to 4307 residues: MANGTADVRKLFIFTTTQNYFGLMSELWDQPLLCNCLEINNFLDDGNQMLLRVQRSDAGISFSNTIEFGDTKDKVLVFFKLRPEVITDENLHDNILVSSMLESPISSLYQAVRQVFAPMLLKDQEWSRNFDPKLQNLLSELEAGLGIVLRRSDTNLTKLKFKEDDTRGILTPSDEFQFWIEQAHRGNKQISKERANYFKELFETIAREFYNLDSLSLLEVVDLVETTQDVVDDVWRQTEHDHYPESRMLHLLDIIGGSFGRFVQKKLGTLNLWEDPYYLVKESLKAGISICEQWVIVCNHLTGQVWQRYVPHPWKNEKYFPETLDKLGKRLEEVLAIRTIHEKFLYFLPASEEKIICLTRVFEPFTGLNPVQYNPYTEPLWKAAVSQYEKIIAPAEQKIAGKLKNYISEIQDSPQQLLQAFLKYKELVKRPTISKELMLERETLLARLVDSIKDFRLDFENRCRGIPGDASGPLSGKNLSEVVNSIVWVRQLELKVDDTIKIAEALLSDLPGFRCFHQSAKDLLDQLKLYEQEQFDDWSRDIQSGLSDSRSGLCIEASSRIMELDSNDGLLKVHYSDRLVILLREVRQLSALGFVIPAKIQQVANIAQKFCKQAIILKQVAHFYNSIDQQMIQSQRPMMLQSALAFEQIIKNSKAGSGGKSQITWDNPKELEGYIQKLQNAAERLATENRKLRKWHTTFCEKVVVLMNIDLLRQQQRWKDGLQELRTGLATVEAQGFQASDMHAWKQHWNHQLYKALEHQYQMGLEALNENLPEINIDLTYKQGRLQFRPPFEEIRAKYYREMKRFIGIPNQFKGVGEAGDESIFSIMIDRNASGFLTIFSKAEDLFRRLSAVLHQHKEWIVIGQVDMEALVEKHLFTVHDWEKNFKALKIKGKEVERLPSAVKVDCLNINCNPVKTVIDDLIQKLFDLLVLSLKKSIQAHLHEIDTFVTEAMEVLTIMPQSVEEIGDANLQYSKLQERKPEILPLFQEAEDKNRLLRTVAGGGLETISNLKAKWDKFELMMESHQLMIKDQIEVMKGNVKSRLQIYYQELEKFKARWDQLKPGDDVIETGQHNTLDKSAKLIKEKKIEFDDLEVTRKKLVDDCHHFRLEEPNFSLASSISKDIESCAQIWAFYEEFQQGFQEMANEDWITFRTKTYLFEEFLMNWHDRLRKVEEHSVMTVKLQSEVDKYKIVIPILKYVRGEHLSPDHWLDLFRLLGLPRGTSLEKLLFGDLLRVADTIVAKAADLKDLNSRAQGEVTIREALRELDLWGVGAVFTLIDYEDSQSRTMKLIKDWKDIVNQVGDNRCLLQSLKDSPYYKGFEDKVSIWERKLAELDEYLQNLNHIQRKWVYLEPIFGRGALPKEQTRFNRVDEDFRSIMTDIKKDNRVTTLTTHAGIRNSLLTILDQLQRCQKSLNEFLEEKRSAFPRFYFIGDDDLLEILGQSTNPSVIQSHLKKLFAGINSVCFDEKSKHITAMKSLEGEVVPFKNKVPLSNNVETWLNDLALEMKKTLEQLLKECVTTGRSSQGAVDPSLFPSQILCLAEQIKFTEDVENAIKDHSLHQIETQLVNKLEQYTNIDTSSEDPGNTESGILELKLKALILDIIHNIDVVKQLNQIQVHTTEDWAWKKQLRFYMKSDHTCCVQMVDSEFQYTYEYQGNASKLVYTPLTDKCYLTLTQAMKMGLGGNPYGPAGTGKTESVKALGGLLGRQVLVFNCDEGIDVKSMGRIFVGLVKCGAWGCFDEFNRLEESVLSAVSMQIQTIQDALKNHRTVCELLGKEVEVNSNSGIFITMNPAGKGYGGRQKLPDNLKQLFRPVAMSHPDNELIAEVILYSEGFKDAKVLSRKLVAIFNLSRELLTPQQHYDWGLRALKTVLRGSGNLLRQLNKSGTTQNANESHIVVQALRLNTMSKFTFTDCTRFDALIKDVFPGIELKEVEYDELSAALKQVFEEANYEIIPNQIKKALELYEQLCQRMGVVIVGPSGAGKSTLWRMLRAALCKTGKVVKQYTMNPKAMPRYQLLGHIDMDTREWSDGVLTNSARQVVREPQDVSSWIICDGDIDPEWIESLNSVLDDNRLLTMPSGERIQFGPNVNFVFETHDLSCASPATISRMGMIFLSDEETDLNSLIKSWLRNQPAEYRNNLENWIGDYFEKALQWVLKQNDYVVETSLVGTVMNGLSHLHGCRDHDEFIINLIRGLGGNLNMKSRLEFTKEVFHWARESPPDFHKPMDTYYDSTRGRLATYVLKKPEDLTADDFSNGLTLPVIQTPDMQRGLDYFKPWLSSDTKQPFILVGPEGCGKGMLLRYAFSQLRSTQIATVHCSAQTTSRHLLQKLSQTCMVISTNTGRVYRPKDCERLVLYLKDINLPKLDKWGTSTLVAFLQQVLTYQGFYDENLEWVGLENIQIVASMSAGGRLGRHKLTTRFTSIVRLCSIDYPEREQLQTIYGAYLEPVLHKNLKNHSIWGSSSKIYLLAGSMVQVYEQVRAKFTVDDYSHYFFTPCILTQWVLGLFRYDLEGGSSNHPLDYVLEIVAYEARRLFRDKIVGAKELHLFDIILTSVFQGDWGSDILDNMSDSFYVTWGARHNSGARAAPGQPLPPHGKPLGKLNSTDLKDVIKKGLIHYGRDNQNLDILLFHEVLEYMSRIDRVLSFPGGSLLLAGRSGVGRRTITSLVSHMHGAVLFSPKISRGYELKQFKNDLKHVLQLAGIEAQQVVLLLEDYQFVHPTFLEMINSLLSSGEVPGLYTLEELEPLLLPLKDQASQDGFFGPVFNYFTYRIQQNLHIVLIMDSANSNFMINCESNPALHKKCQVLWMEGWSNSSMKKIPEMLFSETGGGEKYNDKKRKEEKKKNSVDPDFLKSFLLIHESCKAYGATPSRYMTFLHVYSAISSSKKKELLKRQSHLQAGVSKLNEAKALVDELNRKAGEQSVLLKTKQDEADAALQMITVSMQDASEQKTELERLKHRIAEEVVKIEERKNKIDDELKEVQPLVNEAKLAVGNIKPESLSEIRSLRMPPDVIRDILEGVLRLMGIFDTSWVSMKSFLAKRGVREDIATFDARNISKEIRESVEELLFKNKGSFDPKNAKRASTAAAPLAAWVKANIQYSHVLERIHPLETEQAGLESNLKKTEDRKRKLEELLNSVGQKVSELKEKFQSRTSEAAKLEAEVSKAQETIKAAEVLINQLDREHKRWNAQVVEITEELATLPKRAQLAAAFITYLSAAPESLRKTCLEEWTKSAGLEKFDLRRFLCTESEQLIWKSEGLPSDDLSIENALVILQSRVCPFLIDPSSQATEWLKTHLKDSRLEVINQQDSNFITALELAVRFGKTLIIQEMDGVEPVLYPLLRRDLVAQGPRYVVQIGDKIIDYNEEFRLFLSTRNPNPFIPPDAASIVTEVNFTTTRSGLRGQLLALTIQHEKPDLEEQKTKLLQQEEDKKIQLAKLEESLLETLATSQGNILENKDLIESLNQTKASSALIQESLKESYKLQISLDQERDAYLPLAESASKMYFIISDLSKINNMYRFSLAAFLRLFQRALQNKQDSENTEQRIQSLISSLQHMVYEYICRCLFKADQLMFALHFVRGMHPELFQENEWDTFTGVVVGDMLRKADSQQKIRDQLPSWIDQERSWAVATLKIALPSLYQTLCFEDAALWRTYYNNSMCEQEFPSILAKKVSLFQQILVVQALRPDRLQSAMALFACKTLGLKEVSPLPLNLKRLYKETLEIEPILIIISPGADPSQELQELANAERSGECYHQVAMGQGQADLAIQMLKECARNGDWLCLKNLHLVVSWLPVLEKELNTLQPKDTFRLWLTAEVHPNFTPILLQSSLKITYESPPGLKKNLMRTYESWTPEQISKKDNTHRAHALFSLAWFHAACQERRNYIPQGWTKFYEFSLSDLRAGYNIIDRLFDGAKDVQWEFVHGLLENAIYGGRIDNYFDLRVLQSYLKQFFNSSVIDVFNQRNKKSIFPYSVSLPQSCSILDYRAVIEKIPEDDKPSFFGLPANIARSSQRMISSQVISQLRILGRSITAGSKFDREIWSNELSPVLNLWKKLNQNSNLIHQKVPPPNDRQGSPILSFIILEQFNAIRLVQSVHQSLAALSKVIRGTTLLSSEVQKLASALLNQKCPLAWQSKWEGPEDPLQYLRGLVARALAIQNWVDKAEKQALLSETLDLSELFHPDTFLNALRQETARAVGRSVDSLKFVASWKGRLQEAKLQIKISGLLLEGCSFDGNQLSENQLDSPSVSSVLPCFMGWIPQDACGPYSPDECISLPVYTSAERDRVVTNIDVPCGGNQDQWIQCGAALFLKNQ.

Residues 1 to 1650 (MANGTADVRK…CVQMVDSEFQ (1650 aa)) form a stem region. 145-152 (LGIVLRRS) is a binding site for ATP. The stretch at 1074 to 1103 (NTLDKSAKLIKEKKIEFDDLEVTRKKLVDD) forms a coiled coil. AAA stretches follow at residues 1651–1875 (YTYE…VLRG), 1938–2161 (ELSA…KQND), 2251–2505 (ADDF…WVLG), and 2617–2863 (HYGR…ESCK). ATP-binding positions include 1689 to 1696 (GPAGTGKT), 1979 to 1986 (GPSGAGKS), 2291 to 2298 (GPEGCGKG), and 2655 to 2662 (GRSGVGRR). The segment at 2881–3169 (AISSSKKKEL…AEVSKAQETI (289 aa)) is stalk. Coiled-coil stretches lie at residues 2897–2982 (LQAG…KEVQ), 3109–3200 (LETE…LATL), and 3408–3442 (IQHEKPDLEEQKTKLLQQEEDKKIQLAKLEESLLE). AAA stretches follow at residues 3244–3473 (LCTE…LIQE) and 3690–3905 (MALF…IIDR).

This sequence belongs to the dynein heavy chain family. In terms of assembly, the cytoplasmic dynein complex 2 is probably composed by a heavy chain DYNC2H1 homodimer and a number of DYNC2LI1 light intermediate chains.

It localises to the cytoplasm. It is found in the cytoskeleton. The protein resides in the cilium axoneme. The protein localises to the cell membrane. In terms of biological role, may function as a motor for intraflagellar retrograde transport. Functions in cilia biogenesis. May play a role in transport between endoplasmic reticulum and Golgi or organization of the Golgi in cells. The sequence is that of Cytoplasmic dynein 2 heavy chain 1 (DYNC2H1) from Homo sapiens (Human).